A 930-amino-acid chain; its full sequence is Progesterone receptor (930 aa).

Residues 1–11 are compositionally biased toward basic and acidic residues; that stretch reads MTELKAKEPRA. Disordered regions lie at residues 1–133 and 148–260; these read MTEL…ASPA and LPED…SGAA. Residues 1–165 are AF3; mediates transcriptional activation; sequence MTELKAKEPR…PATKGVLAPL (165 aa). The segment at 1-565 is modulating, Pro-Rich; sequence MTELKAKEPR…PQYSFESLPQ (565 aa). A Glycyl lysine isopeptide (Lys-Gly) (interchain with G-Cter in SUMO) cross-link involves residue Lys-7. Ser-20 carries the post-translational modification Phosphoserine. Positions 38–49 are enriched in polar residues; that stretch reads QGSQTSEASSVV. An LXXL motif 1 motif is present at residues 56-60; sequence LDGLL. Ser-82 bears the Phosphoserine mark. An LXXL motif 2 motif is present at residues 116–120; that stretch reads LDTLL. Position 131 is a phosphoserine (Ser-131). The tract at residues 166 to 304 is mediates transcriptional transrepression; that stretch reads MSRPEDKAGD…LATSVVDFIH (139 aa). Positions 184–188 match the Nuclear localization signal motif; it reads KVLPR. Low complexity predominate over residues 187–204; it reads PRGLSPSRQLLLPSSGSP. Ser-191 and Ser-212 each carry phosphoserine. Phosphoserine; by MAPK1 is present on Ser-293. The interval 334–356 is disordered; sequence AASPFVPQRGSPSASSTPVAGGD. At Ser-344 the chain carries Phosphoserine; by MAPK. A Glycyl lysine isopeptide (Lys-Gly) (interchain with G-Cter in SUMO); alternate cross-link involves residue Lys-387. Lys-387 participates in a covalent cross-link: Glycyl lysine isopeptide (Lys-Gly) (interchain with G-Cter in ubiquitin); alternate. Phosphoserine; by CDK2 is present on Ser-399. The segment at 415 to 454 is disordered; sequence DFQLAAPPPPSLPPRVPSSRPGEAAVAASPGSASVSSSSS. The span at 420–430 shows a compositional bias: pro residues; it reads APPPPSLPPRV. Residues 431–454 are compositionally biased toward low complexity; it reads PSSRPGEAAVAASPGSASVSSSSS. An AF1; mediates transcriptional activation region spans residues 457 to 547; sequence STLECILYKA…VYTPYLNYLR (91 aa). Lys-532 participates in a covalent cross-link: Glycyl lysine isopeptide (Lys-Gly) (interchain with G-Cter in SUMO). Positions 566 to 640 form a DNA-binding region, nuclear receptor; the sequence is KICLICGDEA…AGMVLGGRKF (75 aa). NR C4-type zinc fingers lie at residues 568 to 588 and 604 to 628; these read CLIC…CGSC and CAGR…LRKC. Position 673 is a phosphoserine (Ser-673). The NR LBD domain occupies 676–910; it reads QEIQLIPPLI…EFPEMMSEVI (235 aa). The tract at residues 684–930 is AF2; mediates transcriptional activation; that stretch reads LINLLMSIEP…MVKPLLFHKK (247 aa). Arg-763 is a progesterone binding site.

This sequence belongs to the nuclear hormone receptor family. NR3 subfamily. Interacts with SMARD1 and UNC45A. Interacts with CUEDC2; the interaction promotes ubiquitination, decreases sumoylation, and represses transcriptional activity. Interacts with PIAS3; the interaction promotes sumoylation of PR in a hormone-dependent manner, inhibits DNA-binding, and alters nuclear export. Interacts with SP1; the interaction requires ligand-induced phosphorylation on Ser-344 by ERK1/2-MAPK. Interacts with PRMT2. Interacts with NCOA2 and NCOA1. Interacts with KLF9. Interacts with GTF2B. Phosphorylated on multiple serine sites. Several of these sites are hormone-dependent. Phosphorylation on Ser-293 is highly hormone-dependent and modulates ubiquitination and sumoylation on Lys-387. Phosphorylation on Ser-102 and Ser-344 also requires induction by hormone. Basal phosphorylation on Ser-82, Ser-191 and Ser-399 is increased in response to progesterone and can be phosphorylated in vitro by the CDK2-A1 complex. Increased levels of phosphorylation on Ser-399 also in the presence of EGF, heregulin, IGF, PMA and FBS. Phosphorylation at this site by CDK2 is ligand-independent, and increases nuclear translocation and transcriptional activity. Phosphorylation at Ser-293, but not at Ser-191, is impaired during the G(2)/M phase of the cell cycle. Phosphorylation on Ser-344 by ERK1/2 MAPK is required for interaction with SP1. In terms of processing, sumoylation is hormone-dependent and represses transcriptional activity. Sumoylation on all three sites is enhanced by PIAS3. Desumoylated by SENP1. Sumoylation on Lys-387, the main site of sumoylation, is repressed by ubiquitination on the same site, and modulated by phosphorylation at Ser-293. Post-translationally, ubiquitination is hormone-dependent and represses sumoylation on the same site. Promoted by MAPK-mediated phosphorylation on Ser-293. Ubiquitinated by UBR5, leading to its degradation: UBR5 specifically recognizes and binds ligand-bound PGR when it is not associated with coactivators (NCOAs). In presence of NCOAs, the UBR5-degron is not accessible, preventing its ubiquitination and degradation. Palmitoylated by ZDHHC7 and ZDHHC21. Palmitoylation is required for plasma membrane targeting and for rapid intracellular signaling via ERK and AKT kinases and cAMP generation.

Its subcellular location is the nucleus. The protein localises to the cytoplasm. Its function is as follows. The steroid hormones and their receptors are involved in the regulation of eukaryotic gene expression and affect cellular proliferation and differentiation in target tissues. Transcriptional activator of several progesteron-dependent promoters in a variety of cell types. Involved in activation of SRC-dependent MAPK signaling on hormone stimulation. This Oryctolagus cuniculus (Rabbit) protein is Progesterone receptor (PGR).